A 443-amino-acid polypeptide reads, in one-letter code: Xaa-Pro dipeptidase (443 aa).

Residues Asp-246, Asp-257, His-339, Glu-384, and Glu-423 each contribute to the Mn(2+) site.

This sequence belongs to the peptidase M24B family. Bacterial-type prolidase subfamily. Mn(2+) serves as cofactor.

The enzyme catalyses Xaa-L-Pro dipeptide + H2O = an L-alpha-amino acid + L-proline. Its function is as follows. Splits dipeptides with a prolyl residue in the C-terminal position. This Yersinia pestis bv. Antiqua (strain Nepal516) protein is Xaa-Pro dipeptidase.